Consider the following 96-residue polypeptide: Putative pterin-4-alpha-carbinolamine dehydratase (96 aa).

Belongs to the pterin-4-alpha-carbinolamine dehydratase family.

The catalysed reaction is (4aS,6R)-4a-hydroxy-L-erythro-5,6,7,8-tetrahydrobiopterin = (6R)-L-erythro-6,7-dihydrobiopterin + H2O. The polypeptide is Putative pterin-4-alpha-carbinolamine dehydratase (Paraburkholderia phytofirmans (strain DSM 17436 / LMG 22146 / PsJN) (Burkholderia phytofirmans)).